We begin with the raw amino-acid sequence, 140 residues long: ATP synthase epsilon chain (140 aa).

It belongs to the ATPase epsilon chain family. As to quaternary structure, F-type ATPases have 2 components, CF(1) - the catalytic core - and CF(0) - the membrane proton channel. CF(1) has five subunits: alpha(3), beta(3), gamma(1), delta(1), epsilon(1). CF(0) has three main subunits: a, b and c.

The protein localises to the cell inner membrane. Functionally, produces ATP from ADP in the presence of a proton gradient across the membrane. This Neisseria meningitidis serogroup B (strain ATCC BAA-335 / MC58) protein is ATP synthase epsilon chain.